Here is a 472-residue protein sequence, read N- to C-terminus: Cysteine--tRNA ligase (472 aa).

Cys-29 contributes to the Zn(2+) binding site. The 'HIGH' region motif lies at 31-41 (PTVYNYIHIGN). 3 residues coordinate Zn(2+): Cys-214, His-239, and Glu-243. The 'KMSKS' region motif lies at 273–277 (KMSKS). An ATP-binding site is contributed by Lys-276.

Belongs to the class-I aminoacyl-tRNA synthetase family. In terms of assembly, monomer. The cofactor is Zn(2+).

It localises to the cytoplasm. It carries out the reaction tRNA(Cys) + L-cysteine + ATP = L-cysteinyl-tRNA(Cys) + AMP + diphosphate. The protein is Cysteine--tRNA ligase of Lactobacillus gasseri (strain ATCC 33323 / DSM 20243 / BCRC 14619 / CIP 102991 / JCM 1131 / KCTC 3163 / NCIMB 11718 / NCTC 13722 / AM63).